Reading from the N-terminus, the 378-residue chain is Acetylornithine deacetylase (378 aa).

Residue His-76 coordinates Zn(2+). Asp-78 is a catalytic residue. Asp-108 contributes to the Zn(2+) binding site. Glu-140 is an active-site residue. Zn(2+)-binding residues include Glu-141, Glu-165, and His-351.

This sequence belongs to the peptidase M20A family. ArgE subfamily. Homodimer. It depends on Zn(2+) as a cofactor. The cofactor is Co(2+). Glutathione serves as cofactor.

It localises to the cytoplasm. It carries out the reaction N(2)-acetyl-L-ornithine + H2O = L-ornithine + acetate. It functions in the pathway amino-acid biosynthesis; L-arginine biosynthesis; L-ornithine from N(2)-acetyl-L-ornithine (linear): step 1/1. In terms of biological role, catalyzes the hydrolysis of the amide bond of N(2)-acetylated L-amino acids. Cleaves the acetyl group from N-acetyl-L-ornithine to form L-ornithine, an intermediate in L-arginine biosynthesis pathway, and a branchpoint in the synthesis of polyamines. In Vibrio cholerae serotype O1 (strain ATCC 39541 / Classical Ogawa 395 / O395), this protein is Acetylornithine deacetylase.